The primary structure comprises 341 residues: Phenylalanine--tRNA ligase alpha subunit (341 aa).

A Mg(2+)-binding site is contributed by glutamate 259.

The protein belongs to the class-II aminoacyl-tRNA synthetase family. Phe-tRNA synthetase alpha subunit type 1 subfamily. In terms of assembly, tetramer of two alpha and two beta subunits. Mg(2+) serves as cofactor.

It localises to the cytoplasm. It carries out the reaction tRNA(Phe) + L-phenylalanine + ATP = L-phenylalanyl-tRNA(Phe) + AMP + diphosphate + H(+). The protein is Phenylalanine--tRNA ligase alpha subunit of Mycobacterium bovis (strain ATCC BAA-935 / AF2122/97).